The sequence spans 97 residues: Small cell adhesion glycoprotein (97 aa).

Over 1-36 (MTSFPTTPPPAEELMATTILQATEALSPEAEASTAL) the chain is Extracellular. Thr2 carries an O-linked (GalNAc...) threonine glycan. Ser3 carries O-linked (GalNAc...) serine glycosylation. O-linked (GalNAc...) threonine glycosylation is found at Thr6, Thr7, Thr17, Thr18, and Thr23. Residues 37-57 (IAVVITVVFLTLLSVVILIFF) traverse the membrane as a helical; Signal-anchor for type III membrane protein segment. Residues 58-97 (YLYKNKGSYVTYEPADGEPGAVVLMENDSAKGREKEEYFI) lie on the Cytoplasmic side of the membrane.

The protein belongs to the SMAGP family. Post-translationally, O-glycosylated. The O-glycan is modified with sialic acid residues.

It is found in the cell membrane. It localises to the cytoplasmic vesicle membrane. May play a role in epithelial cell-cell contacts. May play a role in tumor invasiveness and metastasis formation. This Bos taurus (Bovine) protein is Small cell adhesion glycoprotein (SMAGP).